The primary structure comprises 578 residues: Hyaluronan synthase 1 (578 aa).

Residues 1 to 25 are Cytoplasmic-facing; that stretch reads MRQQDAPKPTPAACRCSGLARRVLT. A helical transmembrane segment spans residues 26–46; that stretch reads IAFALLILGLMTWAYAAGVPL. At 47–52 the chain is on the extracellular side; the sequence is ASDRYG. Residues 53–73 form a helical membrane-spanning segment; sequence LLAFGLYGAFLSAHLVAQSLF. Over 74–399 the chain is Cytoplasmic; sequence AYLEHRRVAA…NALWWHRHHA (326 aa). Residues 400-420 form a helical membrane-spanning segment; it reads WMTYEAVVSGLFPFFVAATVL. At 421-430 the chain is on the extracellular side; it reads RLFYAGRPWA. The helical transmembrane segment at 431–451 threads the bilayer; the sequence is LLWVLLCVQGVALAKAAFAAW. The Cytoplasmic segment spans residues 452–457; the sequence is LRGCLR. Residues 458–478 traverse the membrane as a helical segment; that stretch reads MVLLSLYAPLYMCGLLPAKFL. The Extracellular portion of the chain corresponds to 479–497; that stretch reads ALVTMNQSGWGTSGRRKLA. Residues 498–518 form a helical membrane-spanning segment; the sequence is ANYVPLLPLALWALLLLGGLV. Topologically, residues 519-540 are cytoplasmic; it reads RSVAHEARADWSGPSRAAEAYH. Residues 541-561 traverse the membrane as a helical segment; the sequence is LAAGAGAYVGYWVAMLTLYWV. Residues 562-578 lie on the Extracellular side of the membrane; it reads GVRRLCRRRTGGYRVQV.

Belongs to the NodC/HAS family. Mg(2+) serves as cofactor. Widely expressed. Highly expressed in ovary followed by spleen, thymus, prostate, testes and large intestine. Weakly expressed in small intestine.

It localises to the membrane. The enzyme catalyses [hyaluronan](n) + UDP-N-acetyl-alpha-D-glucosamine = N-acetyl-beta-D-glucosaminyl-(1-&gt;4)-[hyaluronan](n) + UDP + H(+). It catalyses the reaction N-acetyl-beta-D-glucosaminyl-(1-&gt;4)-[hyaluronan](n) + UDP-alpha-D-glucuronate = [hyaluronan](n+1) + UDP + H(+). It functions in the pathway glycan biosynthesis; hyaluronan biosynthesis. Functionally, catalyzes the addition of GlcNAc or GlcUA monosaccharides to the nascent hyaluronan polymer. Therefore, it is essential to hyaluronan synthesis a major component of most extracellular matrices that has a structural role in tissues architectures and regulates cell adhesion, migration and differentiation. This is one of the isozymes catalyzing that reaction. Also able to catalyze the synthesis of chito-oligosaccharide depending on the substrate. In Homo sapiens (Human), this protein is Hyaluronan synthase 1 (HAS1).